We begin with the raw amino-acid sequence, 683 residues long: U4/U6 small nuclear ribonucleoprotein Prp3 (683 aa).

The PWI domain maps to 1–87 (MALSKRELDE…HSKSSSDRSR (87 aa)). Residues 73 to 107 (GRSSRHSKSSSDRSRKRELKEVFGDDSEISKESSG) show a composition bias toward basic and acidic residues. The interval 73 to 135 (GRSSRHSKSS…IPGPPSESPG (63 aa)) is disordered. Lys139 is covalently cross-linked (Glycyl lysine isopeptide (Lys-Gly) (interchain with G-Cter in SUMO2)). Residues 153 to 183 (IEERKKQLSFISPPTPQPKTPSSSQPERLPI) are disordered. Ser164 bears the Phosphoserine mark. Phosphothreonine is present on Thr167. Glycyl lysine isopeptide (Lys-Gly) (interchain with G-Cter in SUMO2) cross-links involve residues Lys244 and Lys252. Positions 416-550 (NLVEHPAQLN…VHISVYRVRN (135 aa)) are mediates interaction with SART3. Residue Ser619 is modified to Phosphoserine.

In terms of assembly, component of the precatalytic spliceosome (spliceosome B complex). Component of the U4/U6-U5 tri-snRNP complex, a building block of the precatalytic spliceosome (spliceosome B complex). The U4/U6-U5 tri-snRNP complex is composed of the U4, U6 and U5 snRNAs and at least PRPF3, PRPF4, PRPF6, PRPF8, PRPF31, SNRNP200, TXNL4A, SNRNP40, SNRPB, SNRPD1, SNRPD2, SNRPD3, SNRPE, SNRPF, SNRPG, DDX23, CD2BP2, PPIH, SNU13, EFTUD2, SART1 and USP39, plus LSM2, LSM3, LSM4, LSM5, LSM6, LSM7 and LSM8. Interacts directly with PRPF4. Part of a heteromeric complex containing PPIH, PRPF3 and PRPF4 that is stable in the absence of RNA. Interacts with SART3; the interaction is direct and recruits the deubiquitinase USP4 to PRPF3. Interacts with PRPF19. Interacts ('Lys-63'-linked polyubiquitinated) with PRPF8 (via the MPN (JAB/Mov34) domain); may stabilize the U4/U6-U5 tri-snRNP complex. Interacts with ERCC6. Post-translationally, ubiquitinated. Undergoes 'Lys-63'-linked polyubiquitination by PRPF19 and deubiquitination by USP4. 'Lys-63'-linked ubiquitination increases the affinity for PRPF8 and may regulate the assembly of the U4/U6-U5 tri-snRNP complex. As to expression, highly expressed in retina, liver, kidney and blood. Detected at lower levels in heart and brain.

Its subcellular location is the nucleus. The protein localises to the nucleus speckle. In terms of biological role, plays a role in pre-mRNA splicing as component of the U4/U6-U5 tri-snRNP complex that is involved in spliceosome assembly, and as component of the precatalytic spliceosome (spliceosome B complex). This chain is U4/U6 small nuclear ribonucleoprotein Prp3 (PRPF3), found in Homo sapiens (Human).